Here is a 520-residue protein sequence, read N- to C-terminus: Cobyric acid synthase (520 aa).

The 195-residue stretch at 257–451 folds into the GATase cobBQ-type domain; the sequence is WLTVAAVRLP…VHGLLESDGF (195 aa). Cys-338 serves as the catalytic Nucleophile. His-443 is an active-site residue.

Belongs to the CobB/CobQ family. CobQ subfamily.

The protein operates within cofactor biosynthesis; adenosylcobalamin biosynthesis. In terms of biological role, catalyzes amidations at positions B, D, E, and G on adenosylcobyrinic A,C-diamide. NH(2) groups are provided by glutamine, and one molecule of ATP is hydrogenolyzed for each amidation. This Nocardia farcinica (strain IFM 10152) protein is Cobyric acid synthase.